We begin with the raw amino-acid sequence, 338 residues long: Lipoate-protein ligase A (338 aa).

A BPL/LPL catalytic domain is found at 29-216 (PATQRVLFLW…AFFEHYSERV (188 aa)). Residues arginine 71, 76 to 79 (GAVF), and lysine 134 each bind ATP. Lysine 134 contacts (R)-lipoate.

It belongs to the LplA family. In terms of assembly, monomer.

The protein resides in the cytoplasm. The catalysed reaction is L-lysyl-[lipoyl-carrier protein] + (R)-lipoate + ATP = N(6)-[(R)-lipoyl]-L-lysyl-[lipoyl-carrier protein] + AMP + diphosphate + H(+). Its pathway is protein modification; protein lipoylation via exogenous pathway; protein N(6)-(lipoyl)lysine from lipoate: step 1/2. It participates in protein modification; protein lipoylation via exogenous pathway; protein N(6)-(lipoyl)lysine from lipoate: step 2/2. In terms of biological role, catalyzes both the ATP-dependent activation of exogenously supplied lipoate to lipoyl-AMP and the transfer of the activated lipoyl onto the lipoyl domains of lipoate-dependent enzymes. The chain is Lipoate-protein ligase A from Enterobacter sp. (strain 638).